A 197-amino-acid polypeptide reads, in one-letter code: Ribonuclease HII (197 aa).

The RNase H type-2 domain maps to 9-197 (KLIAGVDEVG…APVKKALEQF (189 aa)). The a divalent metal cation site is built by D15, E16, and D107.

Belongs to the RNase HII family. Mn(2+) is required as a cofactor. Mg(2+) serves as cofactor.

The protein resides in the cytoplasm. It carries out the reaction Endonucleolytic cleavage to 5'-phosphomonoester.. Its function is as follows. Endonuclease that specifically degrades the RNA of RNA-DNA hybrids. This Haemophilus influenzae (strain ATCC 51907 / DSM 11121 / KW20 / Rd) protein is Ribonuclease HII (rnhB).